We begin with the raw amino-acid sequence, 427 residues long: UDP-N-acetyl-D-mannosamine dehydrogenase (427 aa).

Positions 20, 21, 40, 45, 92, and 130 each coordinate NAD(+). Arginine 157, valine 158, lysine 209, asparagine 213, arginine 216, histidine 247, arginine 249, and glycine 260 together coordinate UDP-N-acetyl-alpha-D-mannosaminouronate. Lysine 209 (proton donor/acceptor) is an active-site residue. Catalysis depends on cysteine 263, which acts as the Nucleophile. Tyrosine 317 and lysine 318 together coordinate UDP-N-acetyl-alpha-D-mannosaminouronate. Arginine 325 serves as a coordination point for NAD(+). Lysine 403 contacts UDP-N-acetyl-alpha-D-mannosaminouronate.

The protein belongs to the UDP-glucose/GDP-mannose dehydrogenase family. As to quaternary structure, homotetramer; probably dimer of dimers.

The catalysed reaction is UDP-N-acetyl-alpha-D-mannosamine + 2 NAD(+) + H2O = UDP-N-acetyl-alpha-D-mannosaminouronate + 2 NADH + 3 H(+). In terms of biological role, catalyzes the four-electron oxidation of UDP-N-acetyl-D-mannosamine (UDP-ManNAc), reducing NAD(+) and releasing UDP-N-acetylmannosaminuronic acid (UDP-ManNAcA). The chain is UDP-N-acetyl-D-mannosamine dehydrogenase (wecC) from Methanocaldococcus jannaschii (strain ATCC 43067 / DSM 2661 / JAL-1 / JCM 10045 / NBRC 100440) (Methanococcus jannaschii).